Here is a 276-residue protein sequence, read N- to C-terminus: Bis(5'-nucleosyl)-tetraphosphatase, symmetrical (276 aa).

Belongs to the Ap4A hydrolase family.

It carries out the reaction P(1),P(4)-bis(5'-adenosyl) tetraphosphate + H2O = 2 ADP + 2 H(+). Hydrolyzes diadenosine 5',5'''-P1,P4-tetraphosphate to yield ADP. The protein is Bis(5'-nucleosyl)-tetraphosphatase, symmetrical of Psychromonas ingrahamii (strain DSM 17664 / CCUG 51855 / 37).